A 354-amino-acid polypeptide reads, in one-letter code: Rhodopsin (354 aa).

Over 1 to 36 the chain is Extracellular; it reads MNGTEGPYFYVPMVNTTGIVRSPYEYPQYYLVSPAA. N-linked (GlcNAc...) asparagine glycosylation is found at N2 and N15. A helical transmembrane segment spans residues 37–61; the sequence is YACLGAYMFFLILVGFPINFLTLYV. At 62 to 73 the chain is on the cytoplasmic side; that stretch reads TIEHKKLRTPLN. Residues 74–96 traverse the membrane as a helical segment; that stretch reads YILLNLAVADLFMVFGGFTTTIY. The Extracellular portion of the chain corresponds to 97–110; the sequence is TSMHGYFVLGRLGC. Cysteines 110 and 187 form a disulfide. The chain crosses the membrane as a helical span at residues 111-133; it reads NLEGYFATLGGEIGLWSLVVLAV. A 'Ionic lock' involved in activated form stabilization motif is present at residues 134–136; that stretch reads ERW. Over 134-152 the chain is Cytoplasmic; sequence ERWLVVCKPISNFRFSENH. Residues 153–173 traverse the membrane as a helical segment; it reads AIMGLVFTWIMANSCAAPPLL. Residues 174–202 are Extracellular-facing; sequence GWSRYIPEGMQCSCGVDYYTRAEGFNNES. A helical transmembrane segment spans residues 203 to 224; it reads FVIYMFICHFCIPLIVVFFCYG. Topologically, residues 225 to 252 are cytoplasmic; the sequence is RLLCAVKEAAAAQQESETTQRAEREVTR. A helical transmembrane segment spans residues 253-274; sequence MVVIMVIGFLVCWIPYASVAWY. The Extracellular portion of the chain corresponds to 275 to 286; that stretch reads IFTHQGSEFGPL. The chain crosses the membrane as a helical span at residues 287–308; sequence FMTVPAFFAKSASIYNPLIYIC. K296 carries the N6-(retinylidene)lysine modification. Over 309-354 the chain is Cytoplasmic; that stretch reads MNKQFRHCMITTLCCGKNPFEEEEGASTTASKTEASSVSSSSVSPA. S-palmitoyl cysteine attachment occurs at residues C322 and C323. A disordered region spans residues 333–354; it reads GASTTASKTEASSVSSSSVSPA. A compositionally biased stretch (low complexity) spans 334–354; it reads ASTTASKTEASSVSSSSVSPA.

It belongs to the G-protein coupled receptor 1 family. Opsin subfamily. In terms of processing, phosphorylated on some or all of the serine and threonine residues present in the C-terminal region. Contains one covalently linked retinal chromophore.

Its subcellular location is the membrane. The protein resides in the cell projection. It is found in the cilium. It localises to the photoreceptor outer segment. In terms of biological role, photoreceptor required for image-forming vision at low light intensity. While most salt water fish species use retinal as chromophore, most freshwater fish use 3-dehydroretinal, or a mixture of retinal and 3-dehydroretinal. Light-induced isomerization of 11-cis to all-trans retinal triggers a conformational change that activates signaling via G-proteins. Subsequent receptor phosphorylation mediates displacement of the bound G-protein alpha subunit by arrestin and terminates signaling. This chain is Rhodopsin (rho), found in Poecilia reticulata (Guppy).